A 136-amino-acid chain; its full sequence is Cell wall synthesis protein CwsA (136 aa).

A helical membrane pass occupies residues 94-114 (LLIAAVAVTVLGGGAAAFSIV).

The protein belongs to the CwsA family. As to quaternary structure, interacts with CrgA and Wag31.

The protein resides in the cell membrane. Functionally, required for regulated cell division, cell wall synthesis and the maintenance of cell shape. The protein is Cell wall synthesis protein CwsA of Mycolicibacterium smegmatis (strain ATCC 700084 / mc(2)155) (Mycobacterium smegmatis).